Consider the following 122-residue polypeptide: Small ribosomal subunit protein uS13 (122 aa).

The tract at residues 99-122 (RGQRTHTNARTRKGPAKAIAGKKK) is disordered.

It belongs to the universal ribosomal protein uS13 family. Part of the 30S ribosomal subunit. Forms a loose heterodimer with protein S19. Forms two bridges to the 50S subunit in the 70S ribosome.

In terms of biological role, located at the top of the head of the 30S subunit, it contacts several helices of the 16S rRNA. In the 70S ribosome it contacts the 23S rRNA (bridge B1a) and protein L5 of the 50S subunit (bridge B1b), connecting the 2 subunits; these bridges are implicated in subunit movement. Contacts the tRNAs in the A and P-sites. This is Small ribosomal subunit protein uS13 from Rhodopseudomonas palustris (strain BisB5).